Reading from the N-terminus, the 371-residue chain is O-phospho-L-seryl-tRNA:Cys-tRNA synthase 1 (371 aa).

Residues 78-79 (AR), Asn183, and 206-208 (SGH) each bind pyridoxal 5'-phosphate. An N6-(pyridoxal phosphate)lysine modification is found at Lys209.

The protein belongs to the SepCysS family. In terms of assembly, homodimer. Probably interacts with SepRS. The cofactor is pyridoxal 5'-phosphate.

The catalysed reaction is O-phospho-L-seryl-tRNA(Cys) + hydrogen sulfide + H(+) = L-cysteinyl-tRNA(Cys) + phosphate. Functionally, converts O-phospho-L-seryl-tRNA(Cys) (Sep-tRNA(Cys)) to L-cysteinyl-tRNA(Cys) (Cys-tRNA(Cys)). In Archaeoglobus fulgidus (strain ATCC 49558 / DSM 4304 / JCM 9628 / NBRC 100126 / VC-16), this protein is O-phospho-L-seryl-tRNA:Cys-tRNA synthase 1.